The chain runs to 300 residues: 2-keto-3-deoxy-L-fuconate dehydrogenase (300 aa).

Residues 63–90 and Asp-112 each bind NAD(+); that span reads LITA…IATD. Position 198 (Arg-198) interacts with substrate. Tyr-201 acts as the Proton acceptor in catalysis. NAD(+) contacts are provided by residues Lys-205 and 234 to 238; that span reads IKTPS. Substrate contacts are provided by Arg-242 and Arg-260.

Belongs to the short-chain dehydrogenases/reductases (SDR) family.

Its function is as follows. Plays a role in the catabolism of L-fucose. Catalyzes the NAD(+)-dependent oxidation of 2-keo-3-deoxy-L-fuconate to 2,4-diketo-3-deoxy-L-fuconate. In Xanthomonas campestris pv. campestris (strain ATCC 33913 / DSM 3586 / NCPPB 528 / LMG 568 / P 25), this protein is 2-keto-3-deoxy-L-fuconate dehydrogenase.